A 323-amino-acid polypeptide reads, in one-letter code: tRNA dimethylallyltransferase (323 aa).

An ATP-binding site is contributed by 12 to 19 (GPTAAGKT). 14-19 (TAAGKT) contacts substrate. Interaction with substrate tRNA regions lie at residues 37–40 (DSAL) and 161–165 (QRLMR).

This sequence belongs to the IPP transferase family. Monomer. Requires Mg(2+) as cofactor.

It carries out the reaction adenosine(37) in tRNA + dimethylallyl diphosphate = N(6)-dimethylallyladenosine(37) in tRNA + diphosphate. Its function is as follows. Catalyzes the transfer of a dimethylallyl group onto the adenine at position 37 in tRNAs that read codons beginning with uridine, leading to the formation of N6-(dimethylallyl)adenosine (i(6)A). The polypeptide is tRNA dimethylallyltransferase (Pseudomonas paraeruginosa (strain DSM 24068 / PA7) (Pseudomonas aeruginosa (strain PA7))).